The primary structure comprises 271 residues: Putative protein FAM220BP (271 aa).

The sequence is that of Putative protein FAM220BP (FAM220BP) from Homo sapiens (Human).